The chain runs to 153 residues: Superoxide dismutase [Cu-Zn] (153 aa).

3 residues coordinate Cu cation: histidine 45, histidine 47, and histidine 62. A disulfide bridge connects residues cysteine 56 and cysteine 145. Zn(2+)-binding residues include histidine 62, histidine 70, histidine 79, and aspartate 82. Histidine 119 contacts Cu cation.

This sequence belongs to the Cu-Zn superoxide dismutase family. Homodimer. It depends on Cu cation as a cofactor. Zn(2+) serves as cofactor.

The protein resides in the cytoplasm. The catalysed reaction is 2 superoxide + 2 H(+) = H2O2 + O2. Its function is as follows. Destroys radicals which are normally produced within the cells and which are toxic to biological systems. In Drosophila willistoni (Fruit fly), this protein is Superoxide dismutase [Cu-Zn].